The sequence spans 162 residues: uncharacterized protein (162 aa).

The N-terminal stretch at 1-19 (MARVYILFFSVFFVFPLFS) is a signal peptide. The next 2 membrane-spanning stretches (helical) occupy residues 53 to 75 (LSIG…IRLI) and 105 to 127 (IVFG…YRAV).

Its subcellular location is the cell membrane. This is an uncharacterized protein from Treponema pallidum (strain Nichols).